A 107-amino-acid chain; its full sequence is Glutaredoxin 4 (107 aa).

A Glutaredoxin domain is found at 4–106; sequence LDKIKKQISE…TLLAEVAAKH (103 aa). Lysine 21 lines the glutathione pocket. Residue cysteine 29 participates in [2Fe-2S] cluster binding. Glutathione-binding positions include arginine 58, phenylalanine 70, and 83–84; that span reads CD.

Belongs to the glutaredoxin family. Monothiol subfamily. As to quaternary structure, homodimer.

It is found in the cytoplasm. Functionally, monothiol glutaredoxin involved in the biogenesis of iron-sulfur clusters. The chain is Glutaredoxin 4 (grxD) from Haemophilus influenzae (strain ATCC 51907 / DSM 11121 / KW20 / Rd).